The chain runs to 907 residues: NADH-quinone oxidoreductase subunit G (907 aa).

In terms of domain architecture, 2Fe-2S ferredoxin-type spans 1-83; the sequence is MTIIFVDNEE…GMIVSTSDKI (83 aa). Cysteine 34, cysteine 45, cysteine 48, and cysteine 67 together coordinate [2Fe-2S] cluster. The region spanning 83-122 is the 4Fe-4S His(Cys)3-ligated-type domain; sequence ISRNFRKGIIELLMLNHPHDCPICEEGGSCHLQDMTVMAG. Histidine 99, cysteine 103, cysteine 106, cysteine 112, cysteine 151, cysteine 154, cysteine 157, cysteine 201, cysteine 228, cysteine 231, cysteine 235, and cysteine 263 together coordinate [4Fe-4S] cluster. The 4Fe-4S Mo/W bis-MGD-type domain maps to 221 to 277; it reads MQYAPSICQHCCVGCNISVGEKYGKISRIENRYHNAINHYFLCDLGRFSYDYSNVDE.

Belongs to the complex I 75 kDa subunit family. As to quaternary structure, composed of 13 different subunits. Subunits NuoCD, E, F, and G constitute the peripheral sector of the complex. [2Fe-2S] cluster serves as cofactor. The cofactor is [4Fe-4S] cluster.

It catalyses the reaction a quinone + NADH + 5 H(+)(in) = a quinol + NAD(+) + 4 H(+)(out). Functionally, NDH-1 shuttles electrons from NADH, via FMN and iron-sulfur (Fe-S) centers, to quinones in the respiratory chain. Couples the redox reaction to proton translocation (for every two electrons transferred, four hydrogen ions are translocated across the cytoplasmic membrane), and thus conserves the redox energy in a proton gradient. In Buchnera aphidicola subsp. Baizongia pistaciae (strain Bp), this protein is NADH-quinone oxidoreductase subunit G (nuoG).